A 177-amino-acid polypeptide reads, in one-letter code: Parathyroid hormone-related protein (177 aa).

Positions 1 to 24 (MLRRLVQQWSVAVFLLSYSVPSCG) are cleaved as a signal peptide. Positions 25-34 (RSVEGPGRRL) are excised as a propeptide. The tract at residues 57-68 (RFFLHHLIAEIH) is important for receptor binding. The tract at residues 74–177 (ATSEVSPNSK…PEPELDSRRH (104 aa)) is disordered. Polar residues predominate over residues 76–90 (SEVSPNSKPAANTKN). The Nuclear localization signal signature appears at 108-129 (TNKVEPYKEQPLKTPGKKKKGK). Residues 109 to 118 (NKVEPYKEQP) are compositionally biased toward basic and acidic residues. Positions 122-132 (PGKKKKGKPGK) are enriched in basic residues.

Belongs to the parathyroid hormone family. As to quaternary structure, PTHrP interacts with PTH1R (via N-terminal extracellular domain). In terms of processing, there are several secretory forms, including osteostatin, arising from endoproteolytic cleavage of the initial translation product. Each of these secretory forms is believed to have one or more of its own receptors that mediates the normal paracrine, autocrine and endocrine actions.

The protein localises to the secreted. The protein resides in the cytoplasm. It localises to the nucleus. In terms of biological role, neuroendocrine peptide which is a critical regulator of cellular and organ growth, development, migration, differentiation and survival and of epithelial calcium ion transport. Acts by binding to its receptor, PTH1R, activating G protein-coupled receptor signaling. Regulates endochondral bone development and epithelial-mesenchymal interactions during the formation of the mammary glands and teeth. Required for skeletal homeostasis. Promotes mammary mesenchyme differentiation and bud outgrowth by modulating mesenchymal cell responsiveness to BMPs. Up-regulates BMPR1A expression in the mammary mesenchyme and this increases the sensitivity of these cells to BMPs and allows them to respond to BMP4 in a paracrine and/or autocrine fashion. BMP4 signaling in the mesenchyme, in turn, triggers epithelial outgrowth and augments MSX2 expression, which causes the mammary mesenchyme to inhibit hair follicle formation within the nipple sheath. Its function is as follows. Potent inhibitor of osteoclastic bone resorption. This chain is Parathyroid hormone-related protein (PTHLH), found in Oryctolagus cuniculus (Rabbit).